Reading from the N-terminus, the 194-residue chain is Thymidine kinase (194 aa).

ATP contacts are provided by residues 15 to 22 (GSMFSGKS) and 88 to 91 (DEVQ). Glu89 functions as the Proton acceptor in the catalytic mechanism. Zn(2+) contacts are provided by Cys145, Cys148, Cys183, and His186.

This sequence belongs to the thymidine kinase family. In terms of assembly, homotetramer.

It is found in the cytoplasm. It catalyses the reaction thymidine + ATP = dTMP + ADP + H(+). The sequence is that of Thymidine kinase from Bacillus licheniformis (strain ATCC 14580 / DSM 13 / JCM 2505 / CCUG 7422 / NBRC 12200 / NCIMB 9375 / NCTC 10341 / NRRL NRS-1264 / Gibson 46).